The primary structure comprises 293 residues: Acetylglutamate kinase (293 aa).

Residues 68-69 (GG), R90, and N189 each bind substrate.

It belongs to the acetylglutamate kinase family. ArgB subfamily.

Its subcellular location is the cytoplasm. It catalyses the reaction N-acetyl-L-glutamate + ATP = N-acetyl-L-glutamyl 5-phosphate + ADP. The protein operates within amino-acid biosynthesis; L-arginine biosynthesis; N(2)-acetyl-L-ornithine from L-glutamate: step 2/4. Functionally, catalyzes the ATP-dependent phosphorylation of N-acetyl-L-glutamate. In Caldicellulosiruptor bescii (strain ATCC BAA-1888 / DSM 6725 / KCTC 15123 / Z-1320) (Anaerocellum thermophilum), this protein is Acetylglutamate kinase.